Consider the following 591-residue polypeptide: Aspartate--tRNA ligase (591 aa).

Glu-171 contributes to the L-aspartate binding site. Residues 195-198 (QLFK) are aspartate. Arg-217 is a binding site for L-aspartate. Residues 217 to 219 (RDE) and Gln-226 each bind ATP. His-448 contributes to the L-aspartate binding site. Glu-482 is an ATP binding site. Arg-489 contacts L-aspartate. 534–537 (GLDR) is an ATP binding site.

The protein belongs to the class-II aminoacyl-tRNA synthetase family. Type 1 subfamily. In terms of assembly, homodimer.

The protein localises to the cytoplasm. The catalysed reaction is tRNA(Asp) + L-aspartate + ATP = L-aspartyl-tRNA(Asp) + AMP + diphosphate. Its function is as follows. Catalyzes the attachment of L-aspartate to tRNA(Asp) in a two-step reaction: L-aspartate is first activated by ATP to form Asp-AMP and then transferred to the acceptor end of tRNA(Asp). The sequence is that of Aspartate--tRNA ligase from Edwardsiella ictaluri (strain 93-146).